The following is a 378-amino-acid chain: Chaperone protein DnaJ 1 (378 aa).

In terms of domain architecture, J spans 4 to 68; sequence DYYGILGVDR…DKRRIVDMGG (65 aa). The CR-type zinc finger occupies 129-211; sequence GVKKDLTLDT…CAGDGRVRAR (83 aa). Residues Cys142, Cys145, Cys159, Cys162, Cys185, Cys188, Cys199, and Cys202 each coordinate Zn(2+). CXXCXGXG motif repeat units follow at residues 142-149, 159-166, 185-192, and 199-206; these read CSKCHGSG, CGTCHGSG, CHTCNGTG, and CDECAGDG.

This sequence belongs to the DnaJ family. In terms of assembly, homodimer. The cofactor is Zn(2+).

The protein localises to the cytoplasm. In terms of biological role, participates actively in the response to hyperosmotic and heat shock by preventing the aggregation of stress-denatured proteins and by disaggregating proteins, also in an autonomous, DnaK-independent fashion. Unfolded proteins bind initially to DnaJ; upon interaction with the DnaJ-bound protein, DnaK hydrolyzes its bound ATP, resulting in the formation of a stable complex. GrpE releases ADP from DnaK; ATP binding to DnaK triggers the release of the substrate protein, thus completing the reaction cycle. Several rounds of ATP-dependent interactions between DnaJ, DnaK and GrpE are required for fully efficient folding. Also involved, together with DnaK and GrpE, in the DNA replication of plasmids through activation of initiation proteins. The protein is Chaperone protein DnaJ 1 of Corynebacterium efficiens (strain DSM 44549 / YS-314 / AJ 12310 / JCM 11189 / NBRC 100395).